A 456-amino-acid chain; its full sequence is RuvB-like 1 (456 aa).

Residue 70-77 (GPPGTGKT) coordinates ATP.

Belongs to the RuvB family. As to quaternary structure, forms homohexameric rings. Can form a dodecamer with ruvbl2 made of two stacked hexameric rings. Is a component of the RNA polymerase II holoenzyme complex. Component of the chromatin-remodeling Ino80 complex. Component of some MLL1/MLL complex.

The protein localises to the nucleus. Its subcellular location is the dynein axonemal particle. It carries out the reaction ATP + H2O = ADP + phosphate + H(+). Has single-stranded DNA-stimulated ATPase and ATP-dependent DNA helicase (3' to 5') activity suggesting a role in nuclear processes such as recombination and transcription. Proposed core component of the chromatin remodeling INO80 complex which exhibits DNA- and nucleosome-activated ATPase activity and catalyzes ATP-dependent nucleosome sliding. This Xenopus laevis (African clawed frog) protein is RuvB-like 1 (ruvbl1).